The primary structure comprises 546 residues: MAAKDVVFGDSARSKMVEGVNILANAVKVTLGPKGRNVVLERSFGGPTVTKDGVSVAKEIELKDKLQNMGAQMVKEVASKTSDNAGDGTTTATVLAQSIVREGMKYVASGMNPMDLKRGIDKAVAAAVEELKKISKPCTTNKEIAQVGSISANSDSSIGDRIAEAMDKVGKEGVITVEDGKSLADELDVVEGMQFDRGYLSPYFINNPDKQVAVLDNPFVLLHDKKVSNIRDLLPVLEQVAKAGRPLLIIAEDVEGEALATLVVNNIRGILKTVAVKAPGFGDRRKAMLEDIAILTGGQVIAEETGLTLEKATLAELGQAKRIEVGKENTTIIDGAGEAASIEARVKQVRTQIEEATSDYDREKLQERVAKLAGGVAVIKVGAATEVEMKEKKARVEDALHATRAAVEEGIVAGGGVALIRARTAIAGLTGANADQNAGIKIVLRAMEEPLRQIVTNGGEEASVVVAAVAAGKGNYGYNAATGEYVDMVEAGVVDPTKVTRTALQNAASVAGLLLTTDAAVAELPKEDAPMPGGMPGGMGGMGMDM.

ATP contacts are provided by residues 30 to 33 (TLGP), lysine 51, 87 to 91 (DGTTT), glycine 415, 479 to 481 (NAA), and aspartate 495. The disordered stretch occupies residues 526-546 (KEDAPMPGGMPGGMGGMGMDM). A compositionally biased stretch (gly residues) spans 534 to 546 (GMPGGMGGMGMDM).

This sequence belongs to the chaperonin (HSP60) family. Forms a cylinder of 14 subunits composed of two heptameric rings stacked back-to-back. Interacts with the co-chaperonin GroES.

The protein resides in the cytoplasm. It carries out the reaction ATP + H2O + a folded polypeptide = ADP + phosphate + an unfolded polypeptide.. In terms of biological role, together with its co-chaperonin GroES, plays an essential role in assisting protein folding. The GroEL-GroES system forms a nano-cage that allows encapsulation of the non-native substrate proteins and provides a physical environment optimized to promote and accelerate protein folding. The chain is Chaperonin GroEL 1 from Burkholderia vietnamiensis (strain G4 / LMG 22486) (Burkholderia cepacia (strain R1808)).